Consider the following 23-residue polypeptide: Clavanin-B (23 aa).

At phenylalanine 23 the chain carries Phenylalanine amide.

Its subcellular location is the secreted. Functionally, has antimicrobial activity. The protein is Clavanin-B of Styela clava (Sea squirt).